Reading from the N-terminus, the 548-residue chain is Sterol esterase TGL1 (548 aa).

Met1 is modified (N-acetylmethionine; partial). The Lumenal segment spans residues 1 to 13 (MYFPFLGRLSITD). The helical transmembrane segment at 14–34 (YIIVVLVYIESIISSVLKLIP) threads the bilayer. Topologically, residues 35 to 548 (QPMINLFEWL…TTALDALNKE (514 aa)) are cytoplasmic. In terms of domain architecture, AB hydrolase-1 spans 107-402 (VVYLHHGLLM…NYEHLDLIWG (296 aa)). A GXSXG motif is present at residues 199-203 (GFSQG). Catalysis depends on Ser201, which acts as the Nucleophile. A Glycyl lysine isopeptide (Lys-Gly) (interchain with G-Cter in ubiquitin) cross-link involves residue Lys246. Residues Asp369 and His396 each act as charge relay system in the active site. Disordered stretches follow at residues 449-477 (TTHP…EADE) and 496-516 (IDED…HKEQ). Phosphoserine is present on residues Ser462 and Ser466. Residues 502-516 (NEHQDDTEDQIHKEQ) are compositionally biased toward basic and acidic residues. Phosphoserine occurs at positions 521 and 538. The interval 528–548 (KDLRQLDANSSTTALDALNKE) is disordered. Thr539 is subject to Phosphothreonine.

It belongs to the AB hydrolase superfamily. Not N-glycosylated.

Its subcellular location is the lipid droplet. The protein localises to the membrane. The enzyme catalyses a sterol ester + H2O = a sterol + a fatty acid + H(+). Functionally, mediates the hydrolysis of steryl esters (SE). Preferentially hydrolyzes ergosteryl and zymosteryl esters. Required for mobilization of SEs from lipid particles/droplets, thereby playing a central role in lipid metabolism and sterol homeostasis. Sterol intermediates stored in SE and set free by SE hydrolases are recycled to the sterol biosynthetic pathway and converted to the final product, ergosterol, in the endoplasmic reticulum. Also has weak lipase activity toward triglycerides at neutral pH, however, the physiological relevance of this activity is unclear. The protein is Sterol esterase TGL1 (TGL1) of Saccharomyces cerevisiae (strain ATCC 204508 / S288c) (Baker's yeast).